The following is a 28-amino-acid chain: Taicatoxin, alpha-neurotoxin-like component (28 aa).

C3 and C21 are disulfide-bonded.

Belongs to the three-finger toxin family. Long-chain subfamily. Type II alpha-neurotoxin sub-subfamily. Heterotrimer composed of this alpha-neurotoxin-like peptide of 8 kDa, a neurotoxic phospholipase of 16 kDa (AC Q7LZG2) and a serine protease inhibitor of 7 kDa (AC B7S4N9) at an approximate stoichiometry of 1:1:4; non-covalently linked. As to expression, expressed by the venom gland.

It localises to the secreted. The heterotrimer blocks the voltage-dependent L-type calcium channels (Cav1/CACNA1) from the heart, and the small conductance calcium-activated potassium channels (KCa2/KCNN) in the chromaffin cells and in the brain. Is very toxic to mice. The chain is Taicatoxin, alpha-neurotoxin-like component from Oxyuranus scutellatus scutellatus (Australian taipan).